The following is a 333-amino-acid chain: Anthranilate phosphoribosyltransferase (333 aa).

Residues glycine 80, 83-84, threonine 88, 90-93, 108-116, and serine 120 each bind 5-phospho-alpha-D-ribose 1-diphosphate; these read GD, NLST, and KHGNRSASG. Residue glycine 80 participates in anthranilate binding. Serine 92 contacts Mg(2+). Position 111 (asparagine 111) interacts with anthranilate. Residue arginine 166 participates in anthranilate binding. Mg(2+) contacts are provided by aspartate 224 and glutamate 225.

Belongs to the anthranilate phosphoribosyltransferase family. Homodimer. Mg(2+) is required as a cofactor.

The enzyme catalyses N-(5-phospho-beta-D-ribosyl)anthranilate + diphosphate = 5-phospho-alpha-D-ribose 1-diphosphate + anthranilate. The protein operates within amino-acid biosynthesis; L-tryptophan biosynthesis; L-tryptophan from chorismate: step 2/5. Its function is as follows. Catalyzes the transfer of the phosphoribosyl group of 5-phosphorylribose-1-pyrophosphate (PRPP) to anthranilate to yield N-(5'-phosphoribosyl)-anthranilate (PRA). This chain is Anthranilate phosphoribosyltransferase, found in Pyrobaculum arsenaticum (strain DSM 13514 / JCM 11321 / PZ6).